The sequence spans 740 residues: Ion-translocating oxidoreductase complex subunit C (740 aa).

4Fe-4S ferredoxin-type domains are found at residues 369–397 and 407–436; these read GEPQ…QQLY and KATT…VQYF. Residues C377, C380, C383, C387, C416, C419, C422, and C426 each contribute to the [4Fe-4S] cluster site. Disordered stretches follow at residues 602-621 and 660-718; these read KLEQ…PRKA and ARAK…RKAA. Residues 611–621 show a composition bias toward basic and acidic residues; sequence KPEEQVDPRKA.

The protein belongs to the 4Fe4S bacterial-type ferredoxin family. RnfC subfamily. In terms of assembly, the complex is composed of six subunits: RsxA, RsxB, RsxC, RsxD, RsxE and RsxG. Requires [4Fe-4S] cluster as cofactor.

The protein resides in the cell inner membrane. In terms of biological role, part of a membrane-bound complex that couples electron transfer with translocation of ions across the membrane. Required to maintain the reduced state of SoxR. This is Ion-translocating oxidoreductase complex subunit C from Escherichia coli O9:H4 (strain HS).